A 3587-amino-acid polypeptide reads, in one-letter code: MEITFYPLTDAQKRIWYTEKFYPHTSISNLAGIGKLVSADAIDYVLVEQAIQEFIRRNDAMRLRLRLDENGEPVQYISEYRPVDIKHTDTTEDPNAIEFISQWSREETKKPLPLYDCDLFRFSLFTIKENEVWFYANVHHVISDGISMNILGNAIMHIYLELASGSETKEGISHSFIDHVLSEQEYAQSKRFEKDKAFWNKQFESVPELVSLKRNASAGGSLDAERFSKDVPEALHQQILSFCEANKVSVLSVFQSLLAAYLYRVSGQNDVVTGTFMGNRTNAKEKQMLGMFVSTVPLRTNIDGGQAFSEFVKDRMKDLMKTLRHQKYPYNLLINDLRETKSSLTKLFTVSLEYQVMQWQKEEDLAFLTEPIFSGSGLNDVSIHVKDRWDTGKLTIDFDYRTDLFSREEINMICERMITMLENALTHPEHTIDELTLISDAEKEKLLARAGGKSVSYRKDMTIPELFQEKAELLSDHPAVVFEDRTLSYRTLHEQSARIANVLKQKGVGPDSPVAVLIERSERMITAIMGILKAGGAYVPIDPGFPAERIQYILEDCGADFILTESKVAAPEADAELIDLDQAIEEGAEESLNADVNARNLAYIIYTSGTTGRPKGVMIEHRQVHHLVESLQQTIYQSGSQTLRMALLAPFHFDASVKQIFASLLLGQTLYIVPKKTVTNGAALTAYYRKNSIEATDGTPAHLQMLAAAGDFEGLKLKHMLIGGEGLSSVVADKLLKLFKEAGTAPRLTNVYGPTETCVDASVHPVIPENAVQSAYVPIGKALGNNRLYILDQKGRLQPEGVAGELYIAGDGVGRGYLHLPELTEEKFLQDPFVPGDRMYRTGDVVRWLPDGTIEYLGREDDQVKVRGYRIELGEIEAVIQQAPDVAKAVVLARPDEQGNLEVCAYVVQKPGSEFAPAGLREHAARQLPDYMVPAYFTEVTEIPLTPSGKVDRRKLFALEVKAVSGTAYTAPRNETEKAIAAIWQDVLNVEKAGIFDNFFETGGHSLKAMTLLTKIHKETGIEIPLQFLFEHPTITALAEEADHRESKAFAVIEPAEKQEHYPLSLAQQRTYIVSQFEDAGVGYNMPAAAILEGPLDIQKLERAFQGLIRRHESLRTSFVLENSTPRQKIHDSVDFNIEMIERGGRSDEAIMASFVRTFDLAKAPLFRIGLLGLEENRHMLLFDMHHLISDGVSIGIMLEELARIYKGEQLPDLRLQYKDYAVWQSRQAAEGYKKDQAYWKEVFAGELPVLQLLSDYPRPPVQSFEGDRVSIKLDAGVKDRLNRLAEQNGATLYMVMLSAYYTLLSKYTGQDDIIVGTPSAGRNHSDTEGIIGMFVNTLAIRSEVKQNETFTQLISRVRKRVLDAFSHQDYPFEWLVEDLNIPRDVSRHPLFDTMFSLQNATEGIPAVGDLSLSVQETNFKIAKFDLTVQARETDEGIEIDVDYSTKLFKQSTADRLLTHFARLLEDAAADPEKPISEYKLLSEEEAASQIQQFNPGRTPYPKDKTIVQLFEEQAANTPDHTALQYEGESLTYRELNERANRLARGILSLGAGEGRTAAVLCERSMDMIVSILAVLKSGSAYVPIDPEHPIQRMQHFFRDSGAKVLLTQRKLKALAEEAEFKGVIVLADEEESYHADARNLALPLDSAAMANLTYTSGTTGTPKGNIVTHANILRTVKETNYLSITEQDTILGLSNYVFDAFMFDMFGSLLNGAKLVLIPKETVLDMARLSRVIERENISILMITTALFHLLVDLNPACLSTLRKIMFGGERASVEHVRKALQTVGKGKLLHMYGPSESTVFATYHPVDELEEHTLSVPIGKPVSNTEVYILDRTGHVQPAGIAGELCVSGEGLVKGYYNRPELTEEKFVPHPFTSGERMYKTGDLARWLPNGDIEFIGRIDHQVKIRGQRIELGEIEHQLQTHDRVQESVVLAVDQGAGDKLLCAYYVGEGDISSQEMREHAAKDLPAYMVPAVFIQMDELPLTGNGKIDRRALPIPDANVSRGVSYVAPRNGTEQKVADIWAQVLQAEQVGAYDHFFDIGGHSLAGMKMLALVHQELGVELSLKDLFQSPTVEGLAQVIASAEKGTAASISPAEKQDTYPVSSPQKRMYVLQQLEDAQTSYNMPAVLRLTGELDVERLNSVMQQLMQRHEALRTTFEIKDGETVQRIWEEAECEIAYFEAPEEETERIVSEFIKPFKIDQLPLFRIGLIKHSDTEHVLLFDMHHIISDGASVGVLIEELSKLYDGETLEPLRIQYKDYAVWQQQFIQSELYKKQEEHWLKELDGELPVLTLPTDYSRPAVQTFEGDRIAFSLEAGKADALRRLAKETDSTLYMVLLASYSAFLSKISGQDDIIVGSPVAGRSQADVSRVIGMFVNTLALRTYPKGEKTFADYLNEVKETALSAFDAQDYPLEDLIGNVQVQRDTSRNPLFDAVFSMQNANIKDLTMKGIQLEPHPFERKTAKFDLTLTADETDGGLTFVLEYNTALFKQETIERWKQYWMELLDAVTGNPNQPLSSLSLVTETEKQALLEAWKGKALPVPTDKTVHQLFEETAQRHKDRPAVTYNGQSWTYGELNAKANRLARILMDCGISPDDRVGVLTKPSLEMSAAVLGVLKAGAAFVPIDPDYPDQRIEYILQDSGAKLLLKQEGISVPDSYTGDVILLDGSRTILSLPLDENDEENPETAVTAENLAYMIYTSGTTGQPKGVMVEHHALVNLCFWHHDAFSMTAEDRSAKYAGFGFDASIWEMFPTWTIGAELHVIEEAIRLDIVRLNDYFETNGVTITFLPTQLAEQFMELENTSLRVLLTGGDKLKRAVKKPYTLVNNYGPTENTVVATSAEIHPEEGSLSIGRAIANTRVYILGEGNQVQPEGVAGELCVAGRGLARGYLNREDETAKRFVADPFVPGERMYRTGDLVKWTGGGIEYIGRIDQQVKVRGYRIELSEIEVQLAQLSEVQDAAVTAVKDKGGNTAIAAYVTPESADIEALKSALKETLPDYMIPAFWVTLNELPVTANGKVDRKALPEPDIEAGSGEYKAPTTDMEELLAGIWQDVLGMSEVGVTDNFFSLGGDSIKGIQMASRLNQHGWKLEMKDLFQHPTIEELTQYVERAEGKQADQGPVEGEVILTPIQRWFFEKNFTNKHHWNQSVMLHAKKGFDPERVEKTLQALIEHHDALRMVYREGQEDVIQYNRGLEAASAQLEVIQIEGQAADYEDRIEREAERLQSSIDLQEGGLLKAGLFQAEDGDHLLLAIHHLVVDGVSWRILLEDFAAVYTQLEQGNEPVLPQKTHSFAEYAERLQDFANSKAFLKEKEYWRQLEEQAVAAKLPKDRESGDQRMKHTKTIEFSLTAEETEQLTTKVHEAYHTEMNDILLTAFGLAMKEWTGQDRVSVHLEGHGREEIIEDLTISRTVGWFTSMYPMVLDMKHADDLGYQLKQMKEDIRHVPNKGVGYGILRYLTAPEHKEDVAFSIQPDVSFNYLGQFDEMSDAGLFTRSELPSGQSLSPETEKPNALDVVGYIENGKLTMSLAYHSLEFHEKTVQTFSDSFKAHLLRIIEHCLSQDGTELTPSDLGDDDLTLDELDKLMEIF.

Carrier domains follow at residues 971 to 1046 (APRN…DHRE), 2010 to 2085 (APRN…ASAE), and 3038 to 3112 (APTT…ERAE). Residues serine 1006, serine 2045, and serine 3073 each carry the O-(pantetheine 4'-phosphoryl)serine modification.

Belongs to the ATP-dependent AMP-binding enzyme family. It depends on pantetheine 4'-phosphate as a cofactor.

It participates in antibiotic biosynthesis; surfactin biosynthesis. Its function is as follows. This protein is a multifunctional enzyme able to activate and polymerize the amino acids Leu, Glu, Asp and Val. Activation sites for these AA consist of individual domains. This chain is Surfactin synthase subunit 1 (srfAA), found in Bacillus subtilis (strain 168).